The sequence spans 256 residues: Small ribosomal subunit protein eS1 (256 aa).

Alanine 2 bears the N-acetylalanine; partial mark.

This sequence belongs to the eukaryotic ribosomal protein eS1 family. As to quaternary structure, component of the small ribosomal subunit. Mature ribosomes consist of a small (40S) and a large (60S) subunit. The 40S subunit contains about 33 different proteins and 1 molecule of RNA (18S). The 60S subunit contains about 49 different proteins and 3 molecules of RNA (25S, 5.8S and 5S).

Its subcellular location is the cytoplasm. The sequence is that of Small ribosomal subunit protein eS1 from Postia placenta (strain ATCC 44394 / Madison 698-R) (Brown rot fungus).